The sequence spans 229 residues: 1-Cys peroxiredoxin PER1 (229 aa).

The 170-residue stretch at 4 to 173 folds into the Thioredoxin domain; the sequence is LTIGDTVPNL…VLRAVDSLLT (170 aa). The Cysteine sulfenic acid (-SOH) intermediate role is filled by Cys46. Positions 205–228 match the Bipartite nuclear localization signal motif; it reads RKMFPQGFETADLPSKKGYLRFTK.

Belongs to the peroxiredoxin family. Prx6 subfamily.

It is found in the nucleus. It localises to the cytoplasm. The enzyme catalyses a hydroperoxide + [thioredoxin]-dithiol = an alcohol + [thioredoxin]-disulfide + H2O. Functionally, thiol-specific peroxidase that catalyzes the reduction of hydrogen peroxide and organic hydroperoxides to water and alcohols, respectively. Seems to contribute to the inhibition of germination during stress. In Zea mays (Maize), this protein is 1-Cys peroxiredoxin PER1 (PER1).